Consider the following 759-residue polypeptide: GTPase-activating protein rrc-1 (759 aa).

One can recognise an SH3 domain in the interval 164-243 (PAIAAAVVTK…PRDCVMLIDD (80 aa)). Residues 280 to 473 (LELTDLYMRT…FFIENSESLF (194 aa)) enclose the Rho-GAP domain. The disordered stretch occupies residues 591-624 (ARSMRPTSRPPPSPRTRRARFSNGSSNNVQKLNE). Over residues 612–622 (SNGSSNNVQKL) the composition is skewed to polar residues.

As to expression, expressed in coelomocytes, excretory cells, uterine-seam cells and GLR cells.

Its function is as follows. Functions as a GTPase-activating protein (GAP) for ced-10/rac-1 and CDC42. The protein is GTPase-activating protein rrc-1 (rrc-1) of Caenorhabditis elegans.